The chain runs to 209 residues: 2,3-bisphosphoglycerate-dependent phosphoglycerate mutase (209 aa).

Substrate contacts are provided by residues 8-15 (RHGQSEGN), 21-22 (TG), Arg60, 87-90 (ERDY), Lys98, 114-115 (RR), and 158-159 (GN). The active-site Tele-phosphohistidine intermediate is His9. The active-site Proton donor/acceptor is Glu87.

This sequence belongs to the phosphoglycerate mutase family. BPG-dependent PGAM subfamily. In terms of assembly, homodimer.

The catalysed reaction is (2R)-2-phosphoglycerate = (2R)-3-phosphoglycerate. The protein operates within carbohydrate degradation; glycolysis; pyruvate from D-glyceraldehyde 3-phosphate: step 3/5. In terms of biological role, catalyzes the interconversion of 2-phosphoglycerate and 3-phosphoglycerate. The sequence is that of 2,3-bisphosphoglycerate-dependent phosphoglycerate mutase from Rhizobium etli (strain ATCC 51251 / DSM 11541 / JCM 21823 / NBRC 15573 / CFN 42).